The primary structure comprises 398 residues: Sphingosine 1-phosphate receptor 5 (398 aa).

Residues 1-40 (MESGLLRPAPVSEVIVLHYNYTGKLRGARYQPGAGLRADA) are Extracellular-facing. An N-linked (GlcNAc...) asparagine glycan is attached at asparagine 20. A helical membrane pass occupies residues 41-61 (VVCLAVCAFIVLENLAVLLVL). Over 62–70 (GRHPRFHAP) the chain is Cytoplasmic. A helical transmembrane segment spans residues 71-91 (MFLLLGSLTLSDLLAGAAYAA). At 92–111 (NILLSGPLTLKLSPALWFAR) the chain is on the extracellular side. The chain crosses the membrane as a helical span at residues 112–132 (EGGVFVALTASVLSLLAIALE). Residues 133 to 151 (RSLTMARRGPAPVSSRGRT) are Cytoplasmic-facing. Residues 152-172 (LAMAAAAWGVSLLLGLLPALG) traverse the membrane as a helical segment. The Extracellular portion of the chain corresponds to 173–192 (WNCLGRLDACSTVLPLYAKA). A helical membrane pass occupies residues 193–213 (YVLFCVLAFVGILAAICALYA). At 214 to 252 (RIYCQVRANARRLPARPGTAGTTSTRARRKPRSLALLRT) the chain is on the cytoplasmic side. Residues 253–273 (LSVVLLAFVACWGPLFLLLLL) form a helical membrane-spanning segment. At 274–287 (DVACPARTCPVLLQ) the chain is on the extracellular side. A helical membrane pass occupies residues 288 to 308 (ADPFLGLAMANSLLNPIIYTL). Over 309 to 398 (TNRDLRHALL…RTLVSEPAAD (90 aa)) the chain is Cytoplasmic. Residue cysteine 323 is the site of S-palmitoyl cysteine attachment. Residues 329-398 (GRDPSGSQQS…RTLVSEPAAD (70 aa)) form a disordered region. Residues 333-347 (SGSQQSASAAEASGG) are compositionally biased toward low complexity. At serine 381 the chain carries Phosphoserine.

Belongs to the G-protein coupled receptor 1 family. In terms of tissue distribution, widely expressed in the brain, most prominently in the corpus callosum, which is predominantly white matter. Detected in spleen, peripheral blood leukocytes, placenta, lung, aorta and fetal spleen. Low-level signal detected in many tissue extracts. Overexpressed in leukemic large granular lymphocytes. Isoform 1 is predominantly expressed in peripheral tissues. Isoform 2 is expressed in brain, spleen and peripheral blood leukocytes.

The protein localises to the cell membrane. Its function is as follows. Receptor for the lysosphingolipid sphingosine 1-phosphate (S1P). S1P is a bioactive lysophospholipid that elicits diverse physiological effect on most types of cells and tissues. Is coupled to both the G(i/0)alpha and G(12) subclass of heteromeric G-proteins. May play a regulatory role in the transformation of radial glial cells into astrocytes and may affect proliferative activity of these cells. The chain is Sphingosine 1-phosphate receptor 5 (S1PR5) from Homo sapiens (Human).